Here is an 800-residue protein sequence, read N- to C-terminus: Phenylalanine--tRNA ligase beta subunit (800 aa).

Positions 39–147 (FDAIADIVVG…QDSVPGVRLV (109 aa)) constitute a tRNA-binding domain. The B5 domain maps to 401 to 477 (WQAAQLRFRP…RVYGMDNIPP (77 aa)). Mg(2+)-binding residues include D455, D461, E464, and E465. The FDX-ACB domain maps to 706 to 800 (PVFPPVKRDI…SLTEALGVRI (95 aa)).

This sequence belongs to the phenylalanyl-tRNA synthetase beta subunit family. Type 1 subfamily. As to quaternary structure, tetramer of two alpha and two beta subunits. Requires Mg(2+) as cofactor.

The protein resides in the cytoplasm. The enzyme catalyses tRNA(Phe) + L-phenylalanine + ATP = L-phenylalanyl-tRNA(Phe) + AMP + diphosphate + H(+). The polypeptide is Phenylalanine--tRNA ligase beta subunit (Oleidesulfovibrio alaskensis (strain ATCC BAA-1058 / DSM 17464 / G20) (Desulfovibrio alaskensis)).